A 507-amino-acid polypeptide reads, in one-letter code: ATP synthase subunit alpha (507 aa).

G170–T177 serves as a coordination point for ATP.

Belongs to the ATPase alpha/beta chains family. In terms of assembly, F-type ATPases have 2 components, CF(1) - the catalytic core - and CF(0) - the membrane proton channel. CF(1) has five subunits: alpha(3), beta(3), gamma(1), delta(1), epsilon(1). CF(0) has three main subunits: a(1), b(2) and c(9-12). The alpha and beta chains form an alternating ring which encloses part of the gamma chain. CF(1) is attached to CF(0) by a central stalk formed by the gamma and epsilon chains, while a peripheral stalk is formed by the delta and b chains.

Its subcellular location is the cell inner membrane. It catalyses the reaction ATP + H2O + 4 H(+)(in) = ADP + phosphate + 5 H(+)(out). In terms of biological role, produces ATP from ADP in the presence of a proton gradient across the membrane. The alpha chain is a regulatory subunit. The sequence is that of ATP synthase subunit alpha from Thermosipho melanesiensis (strain DSM 12029 / CIP 104789 / BI429).